The chain runs to 1579 residues: Eukaryotic translation initiation factor 4 gamma 3 (1579 aa).

Disordered stretches follow at residues Met-1 to Val-35 and Thr-128 to Leu-326. The span at Pro-10–Pro-25 shows a compositional bias: low complexity. Positions Asn-26–Val-35 are enriched in polar residues. The interval Pro-134 to Gly-162 is PABPC1-binding. Pro residues predominate over residues Pro-167–Gln-183. Thr-168 carries the phosphothreonine modification. 3 positions are modified to phosphoserine: Ser-230, Ser-232, and Ser-267. Residues Ser-266–Leu-292 show a composition bias toward low complexity. A compositionally biased stretch (basic and acidic residues) spans Ala-295–Asp-308. Polar residues predominate over residues Pro-315–Leu-326. Phosphoserine occurs at positions 436, 470, 472, and 490. Residues Arg-454–Ser-470 show a composition bias toward basic and acidic residues. Disordered stretches follow at residues Arg-454 to Gly-615, Arg-681 to Glu-706, and Ala-724 to Ile-744. The span at Glu-471–Ala-480 shows a compositional bias: acidic residues. The segment covering Asp-481–Pro-501 has biased composition (polar residues). 2 stretches are compositionally biased toward basic and acidic residues: residues Lys-506–Asp-515 and Ser-549–Glu-563. Low complexity predominate over residues Ser-589–Gly-598. The span at Glu-606–Gly-615 shows a compositional bias: basic and acidic residues. The interval Glu-614–Leu-625 is EIF4E-binding. An eIF3/EIF4A-binding region spans residues Val-694–Thr-1014. HEAT repeat units follow at residues Asp-740 to Asp-778, Thr-779 to Val-826, Asn-827 to Leu-900, Thr-901 to Lys-939, and Ala-940 to Trp-979. The region spanning Phe-750 to Asn-978 is the MIF4G domain. Basic and acidic residues predominate over residues Lys-855 to Asp-871. The tract at residues Lys-855–Glu-875 is disordered. Positions Lys-989–Arg-1018 form a coiled coil. Disordered stretches follow at residues Val-1009 to Lys-1037 and Leu-1067 to Glu-1214. The segment covering Leu-1086–Pro-1098 has biased composition (low complexity). At Ser-1150 the chain carries Phosphoserine; by CaMK1. Basic and acidic residues-rich tracts occupy residues Ser-1150–Glu-1169 and Asp-1179–Lys-1197. Residues Leu-1154–Gly-1176 are a coiled coil. Residue Ser-1212 is modified to Phosphoserine. Residues Glu-1215 to Ser-1337 enclose the MI domain. Residues Ser-1406–Ile-1438 adopt a coiled-coil conformation. The 170-residue stretch at Leu-1410–Asn-1579 folds into the W2 domain. The interval Leu-1427–Asn-1579 is EIF4A-binding. Residues Phe-1565–Asn-1579 are necessary but not sufficient for MKNK1-binding.

It belongs to the eukaryotic initiation factor 4G family. As to quaternary structure, interacts with EIF4A, EIF4E, eIF3 and PABPC1. Part of a complex with EIF4E. eIF4F is a multi-subunit complex, the composition of which varies with external and internal environmental conditions. It is composed of at least EIF4A, EIF4E and EIF4G1/EIF4G3. EIF4G1/EIF4G3 interacts through its C-terminus with the serine/threonine kinases MKNK1, and with MKNK2. Appears to act as a scaffold protein, holding these enzymes in place to phosphorylate eIF4E. Non-phosphorylated EIF4EBP1 competes with EIF4G1/EIFG3 to interact with EIF4E; insulin stimulated MAP-kinase (MAPK1 and MAPK3) phosphorylation of EIF4EBP1 causes dissociation of the complex allowing EIF4G1/EIF4G3 to bind and consequent initiation of translation. EIF4G1/EIF4G3 interacts with PABPC1 to bring about circularization of the mRNA. Interacts with FXR1; promoting translation of FXR1 target mRNAs.

Its function is as follows. Component of the protein complex eIF4F, which is involved in the recognition of the mRNA cap, ATP-dependent unwinding of 5'-terminal secondary structure and recruitment of mRNA to the ribosome. Functional homolog of EIF4G1. The sequence is that of Eukaryotic translation initiation factor 4 gamma 3 (Eif4g3) from Mus musculus (Mouse).